The sequence spans 234 residues: Staphylococcal superantigen-like 5 (234 aa).

Positions 1–30 (MKMTAIAKASLALGILATGTITSLHQTVNA) are cleaved as a signal peptide.

The protein belongs to the staphylococcal/streptococcal toxin family. Interacts with host SELPLG; this interaction prevents SELPLG-mediated neutrophil rolling. Interacts with host MMP9 (via sialic acid-containing O-glycans); this interaction inhibits MMP9 activity. Interacts with host GP1BA and GP6; these interactions play an important role in platelet binding and activation.

Functionally, secreted protein that plays a role in the inhibition of host innate immune system. Modulates the interaction between host SELPLG and P-selectin thereby preventing initial rolling of neutrophils toward the site of infection. Interferes with leukocyte trafficking by inhibiting host metalloproteinase-9/MMP9 activity. Also associates with two different platelet surface receptors GP1A and GP6 leading to platelet activation and aggregation. The sequence is that of Staphylococcal superantigen-like 5 from Staphylococcus aureus (strain NCTC 8325 / PS 47).